Consider the following 565-residue polypeptide: NAD-dependent malic enzyme (565 aa).

Tyrosine 104 serves as the catalytic Proton donor. Arginine 157 is a binding site for NAD(+). Lysine 175 acts as the Proton acceptor in catalysis. Residues glutamate 246, aspartate 247, and aspartate 270 each contribute to the a divalent metal cation site. 2 residues coordinate NAD(+): aspartate 270 and asparagine 418.

This sequence belongs to the malic enzymes family. In terms of assembly, homotetramer. It depends on Mg(2+) as a cofactor. The cofactor is Mn(2+).

The enzyme catalyses (S)-malate + NAD(+) = pyruvate + CO2 + NADH. The catalysed reaction is oxaloacetate + H(+) = pyruvate + CO2. This chain is NAD-dependent malic enzyme, found in Serratia proteamaculans (strain 568).